The following is a 471-amino-acid chain: (13S,14R)-1,13-dihydroxy-N-methylcanadine 13-O-acetyltransferase AT1 (471 aa).

The protein belongs to the plant acyltransferase family.

The catalysed reaction is (13S,14R)-1,13-dihydroxy-N-methylcanadine + acetyl-CoA = (13S,14R)-13-O-acetyl-1-hydroxy-N-methylcanadine + CoA. It functions in the pathway alkaloid biosynthesis. Its function is as follows. Acetyltransferase involved in the biosynthesis of the benzylisoquinoline alkaloid noscapine. Converts (13S,14R)-1,13-dihydroxy-N-methylcanadine to (13S,14R)-13-O-acetyl-1-hydroxy-N-methylcanadine. The sequence is that of (13S,14R)-1,13-dihydroxy-N-methylcanadine 13-O-acetyltransferase AT1 from Papaver somniferum (Opium poppy).